The primary structure comprises 154 residues: Superoxide dismutase [Cu-Zn] (154 aa).

Residues histidine 47 and histidine 64 each contribute to the Cu cation site. Cysteines 58 and 147 form a disulfide. Zn(2+)-binding residues include histidine 64, histidine 72, histidine 81, and aspartate 84. Histidine 121 provides a ligand contact to Cu cation. Arginine 144 is a substrate binding site.

Belongs to the Cu-Zn superoxide dismutase family. Homodimer. Cu cation serves as cofactor. It depends on Zn(2+) as a cofactor.

Its subcellular location is the cytoplasm. The catalysed reaction is 2 superoxide + 2 H(+) = H2O2 + O2. In terms of biological role, destroys radicals which are normally produced within the cells and which are toxic to biological systems. The polypeptide is Superoxide dismutase [Cu-Zn] (SOD1) (Pleurocordyceps sinensis (Polycephalomyces sinensis)).